Here is a 415-residue protein sequence, read N- to C-terminus: Vascular endothelial growth factor C (415 aa).

The N-terminal stretch at 1–31 (MHLLCFLSLACSLLAAALIPSPREAPATVAA) is a signal peptide. Residues 32–107 (FESGLGFSEA…RTGDSVKFAA (76 aa)) constitute a propeptide that is removed on maturation. Disulfide bonds link Cys127/Cys169, Cys158/Cys205, and Cys162/Cys207. 3 N-linked (GlcNAc...) asparagine glycosylation sites follow: Asn171, Asn201, and Asn236. The propeptide occupies 224 to 415 (SLPATLPQCQ…PSYWKRPHLN (192 aa)). Repeat copies occupy residues 276-291 (CGPN…QCVC), 300-315 (CGPH…QCVC), 324-339 (CGAN…QCVC), and 343-358 (CPRN…ACEC). Residues 276-358 (CGPNKELDED…LNPGKCACEC (83 aa)) form a 4 X 16 AA repeats of C-X(10)-C-X-C-X(1,3)-C region.

This sequence belongs to the PDGF/VEGF growth factor family. Homodimer; non-covalent and antiparallel. Interacts with FLT4/VEGFR3; the interaction is required for FLT4/VEGFR3 homodimarization and activation. Undergoes a complex proteolytic maturation which generates a variety of processed secreted forms with increased activity toward VEGFR-3, but only the fully processed form could activate VEGFR-2. VEGF-C first form an antiparallel homodimer linked by disulfide bonds. Before secretion, a cleavage occurs between Arg-223 and Ser-224 producing a heterotetramer. The next extracellular step of the processing removes the N-terminal propeptide. Finally the mature VEGF-C is composed mostly of two VEGF homology domains (VHDs) bound by non-covalent interactions. In terms of tissue distribution, expressed in adult heart, brain, spleen, lung, liver, skeletal muscle, kidney, testis and intestine with higher levels in heart, brain and kidney. Isoform 4 levels are very low. Isoform 3 is mostly expressed in liver and has reduced expression level in other tissues. Isoform 2 is mostly expressed in brain and kidney, although a lower level expression in other tissues is also detectable.

The protein resides in the secreted. In terms of biological role, growth factor active in angiogenesis, and endothelial cell growth, stimulating their proliferation and migration and also has effects on the permeability of blood vessels. May function in angiogenesis of the venous and lymphatic vascular systems during embryogenesis, and also in the maintenance of differentiated lymphatic endothelium in adults. Binds and activates KDR/VEGFR2 and FLT4/VEGFR3 receptors. In Mus musculus (Mouse), this protein is Vascular endothelial growth factor C (Vegfc).